We begin with the raw amino-acid sequence, 263 residues long: MGSATREARARSVSALAGLGSKADLATAEDLFAAGRVVADSVQLRAVLSDPAADRSGKDVLVKRVFGALSAPAVELLGVIAGERWSGQDDVLDAIEELGIRSIAASAPRTVDIPAELLAFGGAVTSDAELELALRSKLADPSAKAALVERLLVGKAAGQTVAITRQLVLQPRGRSVRQALREAARIVAAQDGQTIATVVTATPLPAAQAERLRASLAAKYGDLKLNQVVDPSILGGMRVQIGGDVIDGSVSSRLSKLRLQLAG.

It belongs to the ATPase delta chain family. As to quaternary structure, F-type ATPases have 2 components, F(1) - the catalytic core - and F(0) - the membrane proton channel. F(1) has five subunits: alpha(3), beta(3), gamma(1), delta(1), epsilon(1). F(0) has three main subunits: a(1), b(2) and c(10-14). The alpha and beta chains form an alternating ring which encloses part of the gamma chain. F(1) is attached to F(0) by a central stalk formed by the gamma and epsilon chains, while a peripheral stalk is formed by the delta and b chains.

Its subcellular location is the cell membrane. In terms of biological role, f(1)F(0) ATP synthase produces ATP from ADP in the presence of a proton or sodium gradient. F-type ATPases consist of two structural domains, F(1) containing the extramembraneous catalytic core and F(0) containing the membrane proton channel, linked together by a central stalk and a peripheral stalk. During catalysis, ATP synthesis in the catalytic domain of F(1) is coupled via a rotary mechanism of the central stalk subunits to proton translocation. This protein is part of the stalk that links CF(0) to CF(1). It either transmits conformational changes from CF(0) to CF(1) or is implicated in proton conduction. This Leifsonia xyli subsp. xyli (strain CTCB07) protein is ATP synthase subunit delta.